Consider the following 571-residue polypeptide: Acetolactate synthase large subunit (571 aa).

Glu-51 serves as a coordination point for thiamine diphosphate. Residues Arg-153, 261 to 282, and 304 to 323 each bind FAD; these read HGTYEANMAMHYSDVIFAIGVR and DIDPTSISKTVSADIPIVGD. The segment at 394–474 is thiamine pyrophosphate binding; it reads QHQMFTALYY…VLILNLNNSS (81 aa). Residues Asp-445 and Asn-472 each contribute to the Mg(2+) site.

Belongs to the TPP enzyme family. Dimer of large and small chains. Mg(2+) is required as a cofactor. It depends on thiamine diphosphate as a cofactor.

The enzyme catalyses 2 pyruvate + H(+) = (2S)-2-acetolactate + CO2. The protein operates within amino-acid biosynthesis; L-isoleucine biosynthesis; L-isoleucine from 2-oxobutanoate: step 1/4. It functions in the pathway amino-acid biosynthesis; L-valine biosynthesis; L-valine from pyruvate: step 1/4. The chain is Acetolactate synthase large subunit (ilvI) from Buchnera aphidicola subsp. Schizaphis graminum (strain Sg).